A 358-amino-acid polypeptide reads, in one-letter code: MARRQDEARAGVPLRVEGPPDKEVHLILYHWTHSFSSQKVRLVIAEKALKCEEHDVSLPLSEHNEPWFMRLNSAGEVPVLVHGENIICEATQIIDYLEQTFLDERTPRLMPDEGSMYYPRVQHYRELLDSLPMDAYTHGCILHPELTVDSMIPAYATTRIRSQIGNTESELKKLAEENPDLQEAYIAKQKRLKSKLLDHDNVKYLKKILDELEKVLDQVETELQRRNEETPEEGNQPWLCGESFTLADVSLAVTLHRLKFLGFARRNWGHGKRPNLETYYERVLKRKTFNKVLGHVNNILISAVLPTAFRVAKKRAPKVLGSTLVVGLLVGMGYFAFMLFRRRLGSMILALRPRPNYF.

A GST N-terminal domain is found at 24-105 (VHLILYHWTH…YLEQTFLDER (82 aa)). Residues Lys-50, Lys-172, Lys-173, Lys-188, and Lys-190 each participate in a glycyl lysine isopeptide (Lys-Gly) (interchain with G-Cter in ubiquitin) cross-link. Residues 153-309 (PAYATTRIRS…LISAVLPTAF (157 aa)) enclose the GST C-terminal domain. Residue Lys-203 is modified to N6-acetyllysine; alternate. Lys-203 is covalently cross-linked (Glycyl lysine isopeptide (Lys-Gly) (interchain with G-Cter in ubiquitin); alternate). Glycyl lysine isopeptide (Lys-Gly) (interchain with G-Cter in ubiquitin) cross-links involve residues Lys-206, Lys-207, and Lys-214. 2 helical membrane-spanning segments follow: residues 292–312 (VLGHVNNILISAVLPTAFRVA) and 320–340 (LGSTLVVGLLVGMGYFAFMLF). Positions 320 to 358 (LGSTLVVGLLVGMGYFAFMLFRRRLGSMILALRPRPNYF) are required for mitochondrial localization.

It belongs to the GST superfamily. Homodimer. Post-translationally, ubiquitinated by PRKN during mitophagy, leading to its degradation and enhancement of mitophagy. Deubiquitinated by USP30. In terms of tissue distribution, expressed in brain, spinal cord, muscles and intestinal villi. In the central nervous system expressed most prominently in the cortex, cerebellum, thalamus, olfactory bulb, and spinal cord. Expressed also in sciatic nerves and in dorsal root ganglia.

The protein resides in the mitochondrion outer membrane. Its subcellular location is the cytoplasm. Its function is as follows. Regulates the mitochondrial network by promoting mitochondrial fission. The polypeptide is Ganglioside-induced differentiation-associated protein 1 (Gdap1) (Mus musculus (Mouse)).